A 377-amino-acid chain; its full sequence is Prostaglandin reductase-3 (377 aa).

The residue at position 35 (lysine 35) is an N6-acetyllysine. Residues threonine 185, serine 205, lysine 209, tyrosine 224, serine 247, isoleucine 269, and tyrosine 275 each contribute to the NADP(+) site. Serine 299 carries the post-translational modification Phosphoserine. NADP(+) is bound by residues 303-305 (FFL) and asparagine 361.

The protein belongs to the zinc-containing alcohol dehydrogenase family. Quinone oxidoreductase subfamily.

The protein localises to the peroxisome. It carries out the reaction 13,14-dihydro-15-oxo-prostaglandin E2 + NADP(+) = 15-oxoprostaglandin E2 + NADPH + H(+). It catalyses the reaction 13,14-dihydro-15-oxo-prostaglandin E1 + NADP(+) = 15-oxoprostaglandin E1 + NADPH + H(+). The catalysed reaction is 13,14-dihydro-15-oxo-PGF2alpha + NADP(+) = 15-oxoprostaglandin F2alpha + NADPH + H(+). The enzyme catalyses 13,14-dihydro-15-oxo-prostaglandin F1alpha + NADP(+) = 15-oxoprostaglandin F1alpha + NADPH + H(+). In terms of biological role, functions as 15-oxo-prostaglandin 13-reductase and acts on 15-keto-PGE1, 15-keto-PGE2, 15-keto-PGE1-alpha and 15-keto-PGE2-alpha with highest efficiency towards 15-keto-PGE2-alpha. Overexpression represses transcriptional activity of PPARG and inhibits adipocyte differentiation. This Bos taurus (Bovine) protein is Prostaglandin reductase-3 (PTGR3).